Reading from the N-terminus, the 365-residue chain is Ferrochelatase (365 aa).

Fe cation is bound by residues His211 and Glu292.

This sequence belongs to the ferrochelatase family.

Its subcellular location is the cytoplasm. The enzyme catalyses heme b + 2 H(+) = protoporphyrin IX + Fe(2+). The protein operates within porphyrin-containing compound metabolism; protoheme biosynthesis; protoheme from protoporphyrin-IX: step 1/1. Functionally, catalyzes the ferrous insertion into protoporphyrin IX. In Aromatoleum aromaticum (strain DSM 19018 / LMG 30748 / EbN1) (Azoarcus sp. (strain EbN1)), this protein is Ferrochelatase.